A 379-amino-acid chain; its full sequence is Arginine biosynthesis bifunctional protein ArgJ (379 aa).

The substrate site is built by Thr140, Lys160, Thr171, Glu249, Asn374, and Thr379. Thr171 (nucleophile) is an active-site residue.

It belongs to the ArgJ family. Heterotetramer of two alpha and two beta chains.

It is found in the cytoplasm. It carries out the reaction N(2)-acetyl-L-ornithine + L-glutamate = N-acetyl-L-glutamate + L-ornithine. It catalyses the reaction L-glutamate + acetyl-CoA = N-acetyl-L-glutamate + CoA + H(+). The protein operates within amino-acid biosynthesis; L-arginine biosynthesis; L-ornithine and N-acetyl-L-glutamate from L-glutamate and N(2)-acetyl-L-ornithine (cyclic): step 1/1. Its pathway is amino-acid biosynthesis; L-arginine biosynthesis; N(2)-acetyl-L-ornithine from L-glutamate: step 1/4. Its function is as follows. Catalyzes two activities which are involved in the cyclic version of arginine biosynthesis: the synthesis of N-acetylglutamate from glutamate and acetyl-CoA as the acetyl donor, and of ornithine by transacetylation between N(2)-acetylornithine and glutamate. The chain is Arginine biosynthesis bifunctional protein ArgJ from Archaeoglobus fulgidus (strain ATCC 49558 / DSM 4304 / JCM 9628 / NBRC 100126 / VC-16).